Consider the following 418-residue polypeptide: UDP-N-acetylglucosamine 1-carboxyvinyltransferase (418 aa).

Residue 22–23 (KN) participates in phosphoenolpyruvate binding. Position 92 (arginine 92) interacts with UDP-N-acetyl-alpha-D-glucosamine. Catalysis depends on cysteine 116, which acts as the Proton donor. Cysteine 116 is modified (2-(S-cysteinyl)pyruvic acid O-phosphothioketal). UDP-N-acetyl-alpha-D-glucosamine is bound by residues 121–125 (RPIDL), aspartate 305, and leucine 327.

Belongs to the EPSP synthase family. MurA subfamily.

It is found in the cytoplasm. It carries out the reaction phosphoenolpyruvate + UDP-N-acetyl-alpha-D-glucosamine = UDP-N-acetyl-3-O-(1-carboxyvinyl)-alpha-D-glucosamine + phosphate. The protein operates within cell wall biogenesis; peptidoglycan biosynthesis. In terms of biological role, cell wall formation. Adds enolpyruvyl to UDP-N-acetylglucosamine. This Campylobacter jejuni subsp. jejuni serotype O:23/36 (strain 81-176) protein is UDP-N-acetylglucosamine 1-carboxyvinyltransferase.